The sequence spans 79 residues: Conotoxin TsMSGL-2 (79 aa).

The signal sequence occupies residues 1 to 24 (MSGLGIMVLTLLLLVFMATSHQDA). The propeptide occupies 25–46 (GEKQATQRDAVNVRRRRSIAGR). Cystine bridges form between Cys52–Cys64, Cys56–Cys73, and Cys63–Cys77. Leu78 carries the post-translational modification Leucine amide.

Belongs to the conotoxin O3 superfamily. In terms of tissue distribution, expressed by the venom duct.

It localises to the secreted. This chain is Conotoxin TsMSGL-2, found in Conus tessulatus (Tessellate cone).